The primary structure comprises 495 residues: WD repeat-containing protein 37 (495 aa).

The interval 1 to 34 (MPTESGSWAAARQTKQKRKSHSLSIKRTNSSEQD) is disordered. Residues 22 to 31 (SLSIKRTNSS) show a composition bias toward polar residues. 2 WD repeats span residues 154 to 194 (GHRD…CLIK) and 197 to 236 (GHAG…PTPQ). The segment at 237 to 268 (PMADTSQISGEEEVDFSDKDENDGDGDASSDC) is disordered. Positions 246 to 264 (GEEEVDFSDKDENDGDGDA) are enriched in acidic residues. WD repeat units follow at residues 280–319 (SHQG…LVHS), 322–361 (GHDQ…IHSV), 366–404 (GHTD…SPIA), 407–446 (RTDS…LARL), and 453–494 (GHRR…LLQE).

It localises to the cytoplasm. It is found in the nucleus. The chain is WD repeat-containing protein 37 (wdr37) from Xenopus laevis (African clawed frog).